Consider the following 328-residue polypeptide: Carbonic anhydrase-related protein 11 (328 aa).

An N-terminal signal peptide occupies residues 1–23; that stretch reads MGAAARLSAPRALVLWAALGAAA. One can recognise an Alpha-carbonic anhydrase domain in the interval 33 to 303; it reads DWWSYKDNLQ…LAHRALRGNR (271 aa). 3 N-linked (GlcNAc...) asparagine glycosylation sites follow: Asn-118, Asn-170, and Asn-260. Positions 299-328 are disordered; the sequence is LRGNRDPRHPERRCRGPNYRLHVDGVPHGR. Basic and acidic residues predominate over residues 319–328; that stretch reads LHVDGVPHGR.

This sequence belongs to the alpha-carbonic anhydrase family. Expressed abundantly in the brain with moderate expression also present in spinal cord and thyroid.

It localises to the secreted. Functionally, does not have a catalytic activity. The sequence is that of Carbonic anhydrase-related protein 11 (CA11) from Homo sapiens (Human).